Consider the following 317-residue polypeptide: tRNA-cytidine(32) 2-sulfurtransferase (317 aa).

Residues 1–29 (MNTANNTLPTAADWAGEDGAPDAADTRKI) form a disordered region. Positions 65–70 (SGGKDS) match the PP-loop motif motif. C140, C143, and C231 together coordinate [4Fe-4S] cluster.

The protein belongs to the TtcA family. Homodimer. The cofactor is Mg(2+). Requires [4Fe-4S] cluster as cofactor.

The protein localises to the cytoplasm. It carries out the reaction cytidine(32) in tRNA + S-sulfanyl-L-cysteinyl-[cysteine desulfurase] + AH2 + ATP = 2-thiocytidine(32) in tRNA + L-cysteinyl-[cysteine desulfurase] + A + AMP + diphosphate + H(+). It participates in tRNA modification. In terms of biological role, catalyzes the ATP-dependent 2-thiolation of cytidine in position 32 of tRNA, to form 2-thiocytidine (s(2)C32). The sulfur atoms are provided by the cysteine/cysteine desulfurase (IscS) system. In Acidovorax ebreus (strain TPSY) (Diaphorobacter sp. (strain TPSY)), this protein is tRNA-cytidine(32) 2-sulfurtransferase.